A 677-amino-acid polypeptide reads, in one-letter code: MKKRLIQVMIMFTLLLTMAFSADAADSSYYDEDYRPQYHFTPEANWMNDPNGMVYYAGEYHLFYQYHPYGLQWGPMHWGHAVSKDLVTWEHLPVALYPDEKGTIFSGSAVVDKNNTSGFQTGKEKPLVAIYTQDREGHQVQSIAYSNDKGRTWTKYAGNPVIPNPGKKDFRDPKVFWYEKEKKWVMVLAAGDRILIYTSKNLKQWTYASEFGQDQGSHGGVWECPDLFELPVDGNPNQKKWVMQVSVGNGAVSGGSGMQYFVGDFDGTHFKNENPPNKVLWTDYGRDFYAAVSWSDIPSTDSRRLWLGWMSNWQYANDVPTSPWRSATSIPRELKLKAFTEGVRVVQTPVKELETIRGTSKKWKNLTISPASHNVLAGQSGDAYEINAEFKVSPGSAAEFGFKVRTGENQFTKVGYDRRNAKLFVDRSESGNDTFNPAFNTGKETAPLKPVNGKVKLRIFVDRSSVEVFGNDGKQVITDIILPDRSSKGLELYAANGGVKVKSLTIHPLKKVWGTTPFMSNMTGWTTVNGTWADTIEGKQGRSDGDSFILSSASGSDFTYESDITIKDGNGRGAGALMFRSDKDAKNGYLANVDAKHDLVKFFKFENGAASVIAEYKTPIDVNKKYHLKTEAEGDRFKIYLDDRLVIDAHDSVFSEGQFGLNVWDATAVFQNVTKES.

A signal peptide spans 1 to 24 (MKKRLIQVMIMFTLLLTMAFSADA). Substrate is bound by residues 46–49 (WMND), Gln-65, Trp-73, 105–106 (FS), 171–172 (RD), Glu-223, and Trp-313. Asp-49 is a catalytic residue.

It belongs to the glycosyl hydrolase 32 family.

The protein localises to the secreted. The catalysed reaction is Hydrolysis of terminal, non-reducing (2-&gt;1)- and (2-&gt;6)-linked beta-D-fructofuranose residues in fructans.. Its activity is regulated as follows. Is completely inhibited by Ag(+) and Hg(2+) ions. In terms of biological role, exo-fructosidase that can hydrolyze both levan and inulin, leading to the production of free fructose. Is also able to hydrolyze sucrose and to a small extent raffinose, but not melezitose, stachylose, cellobiose, maltose, and lactose. This Bacillus subtilis (strain 168) protein is Levanase (sacC).